The following is a 402-amino-acid chain: NADH-quinone oxidoreductase subunit D (402 aa).

This sequence belongs to the complex I 49 kDa subunit family. As to quaternary structure, NDH-1 is composed of 14 different subunits. Subunits NuoB, C, D, E, F, and G constitute the peripheral sector of the complex.

The protein localises to the cell inner membrane. It carries out the reaction a quinone + NADH + 5 H(+)(in) = a quinol + NAD(+) + 4 H(+)(out). Its function is as follows. NDH-1 shuttles electrons from NADH, via FMN and iron-sulfur (Fe-S) centers, to quinones in the respiratory chain. The immediate electron acceptor for the enzyme in this species is believed to be ubiquinone. Couples the redox reaction to proton translocation (for every two electrons transferred, four hydrogen ions are translocated across the cytoplasmic membrane), and thus conserves the redox energy in a proton gradient. In Cereibacter sphaeroides (strain ATCC 17029 / ATH 2.4.9) (Rhodobacter sphaeroides), this protein is NADH-quinone oxidoreductase subunit D.